A 207-amino-acid polypeptide reads, in one-letter code: MTSVALFKQDGTQNGDVTLNDAVFGVEPNENVVFDAILMQRASMRQGTHAVKNRSARRGGGRKPWRQKGTGRARQGSIRSPQWRKGGIVFGPTPRSYSYKLPKKVMRLALKSVLSQKVLDNSLVAVDSLAFDAPKTKDFVNVLNNLNVDTKTLVLVEEDNEKAALAGRNLPNVKILKAKGVNVLDVANSDKLVVTQKALDQLEEALA.

Residues 45 to 78 (RQGTHAVKNRSARRGGGRKPWRQKGTGRARQGSI) form a disordered region. Residues 51–71 (VKNRSARRGGGRKPWRQKGTG) show a composition bias toward basic residues.

It belongs to the universal ribosomal protein uL4 family. In terms of assembly, part of the 50S ribosomal subunit.

Functionally, one of the primary rRNA binding proteins, this protein initially binds near the 5'-end of the 23S rRNA. It is important during the early stages of 50S assembly. It makes multiple contacts with different domains of the 23S rRNA in the assembled 50S subunit and ribosome. Its function is as follows. Forms part of the polypeptide exit tunnel. The protein is Large ribosomal subunit protein uL4 of Lactiplantibacillus plantarum (strain ATCC BAA-793 / NCIMB 8826 / WCFS1) (Lactobacillus plantarum).